Consider the following 517-residue polypeptide: Transmembrane protein 180 (517 aa).

At 1 to 11 (MRLGGPWAWLL) the chain is on the extracellular side. The chain crosses the membrane as a helical span at residues 12-43 (GLPTAVVYGSLALFVSVLHNVFLLYYVDTFVS). Residues 44–55 (VYKIDKAAFWVG) are Cytoplasmic-facing. A helical membrane pass occupies residues 56–74 (ETVFLLWNSLNDPLFGWLS). At 75–100 (DRQFLSSQPRSGAGLSSRAVVLARVR) the chain is on the extracellular side. The chain crosses the membrane as a helical span at residues 101 to 118 (ALGWHGPLLALSFLAFWV). Residues 119 to 126 (PWAPAGLQ) are Cytoplasmic-facing. A helical transmembrane segment spans residues 127-151 (FLLCLCLYDGFLTLVDLHHHALLAD). Over 152-155 (LALS) the chain is Extracellular. Residues 156–179 (AHDRTHLNFYCSLFSAAGSLSVFA) form a helical membrane-spanning segment. Over 180 to 191 (SYAFWNKEDFSS) the chain is Cytoplasmic. Residues 192-223 (FRAFCLALATGSGLGFVGAARLLRRRVEAAGR) form a helical membrane-spanning segment. The Extracellular portion of the chain corresponds to 224-264 (EPGCPAMAVNDGLCEEELLVGGEEAGSITLGQYLQQLARHR). A helical transmembrane segment spans residues 265 to 292 (NFLWFVGMDLVQVFHCHFNSNFFPLFLE). The Cytoplasmic segment spans residues 293–305 (HLLSDHISLSTGS). The chain crosses the membrane as a helical span at residues 306-325 (FLLGISYVAPHLNNLYFLPL). Topologically, residues 326–330 (CRRWG) are extracellular. A helical membrane pass occupies residues 331–350 (VYAVVRGLFLLKLGLSLLML). Topologically, residues 351–358 (LAGPDHPG) are cytoplasmic. Residues 359-393 (LLCLFIASNRVFTEGTCKLLTLVVTDLVDEDLVLN) traverse the membrane as a helical segment. Topologically, residues 394 to 402 (HRKQAASAL) are extracellular. The chain crosses the membrane as a helical span at residues 403–429 (LFGMVALVTKPGQTFAPLLGTWLLCFY). Residues 430-466 (TGHDLFQQHPPAPVGSAQPWPEPPAPPPAQAPPLRQG) are Cytoplasmic-facing. Residues 467 to 485 (CFYLLVLVPIACALLQLFT) form a helical membrane-spanning segment. The Extracellular segment spans residues 486–517 (WSQFTLHGRRLHMVKAQRQSLSRAQTLDVKMV).

It localises to the cell membrane. In Bos taurus (Bovine), this protein is Transmembrane protein 180.